A 464-amino-acid chain; its full sequence is MALLTAAARLFGAKNASCLVLAARHASASSTNLKDILADLIPKEQARIKTFRQQHGNTVVGQITVDMMYGGMRGMKGLVYETSVLDPDEGIRFRGYSIPECQKMLPKAKGGEEPLPEGLFWLLVTGQIPTEEQVSWLSKEWAKRAALPSHVVTMLDNFPTNLHPMSQLSAAITALNSESNFARAYAEGIHRTKYWELIYEDCMDLIAKLPCVAAKIYRNLYREGSSIGAIDSKLDWSHNFTNMLGYTDAQFTELMRLYLTIHSDHEGGNVSAHTSHLVGSALSDPYLSFAAAMNGLAGPLHGLANQEVLVWLTQLQKEVGKDVSDEKLRDYIWNTLNSGRVVPGYGHAVLRKTDPRYTCQREFALKHLPHDPMFKLVAQLYKIVPNVLLEQGKAKNPWPNVDAHSGVLLQYYGMTEMNYYTVLFGVSRALGVLAQLIWSRALGFPLERPKSMSTDGLIKLVDSK.

The transit peptide at 1-27 directs the protein to the mitochondrion; it reads MALLTAAARLFGAKNASCLVLAARHAS. Residues 2–21 carry the SIFI-degron motif; sequence ALLTAAARLFGAKNASCLVL. Lys-76 is modified (N6-acetyllysine; alternate). N6-succinyllysine; alternate is present on Lys-76. Residues Lys-103 and Lys-193 each carry the N6-succinyllysine modification. Ser-226 carries the phosphoserine modification. His-301 is a catalytic residue. Residues Lys-321 and Lys-327 each carry the N6-acetyllysine; alternate modification. 2 positions are modified to N6-succinyllysine; alternate: Lys-321 and Lys-327. His-347 is an active-site residue. Arg-356 provides a ligand contact to oxaloacetate. The residue at position 375 (Lys-375) is an N6-acetyllysine; alternate. Lys-375 carries the N6-succinyllysine; alternate modification. Residue Lys-382 is modified to N6-acetyllysine. Residue Lys-393 is modified to N6-acetyllysine; alternate. Lys-393 carries the post-translational modification N6-succinyllysine; alternate. N6,N6,N6-trimethyllysine is present on Lys-395. Asp-402 is an active-site residue. The oxaloacetate site is built by Arg-428 and Arg-448. An N6-succinyllysine modification is found at Lys-450. Lys-459 is modified (N6-acetyllysine; alternate). Position 459 is an N6-succinyllysine; alternate (Lys-459).

This sequence belongs to the citrate synthase family. In terms of assembly, homodimer. Post-translationally, methylated. Trimethylation at Lys-395 by CSKMT decreases citrate synthase activity. In terms of processing, in response to mitochondrial stress, the precursor protein is ubiquitinated by the SIFI complex in the cytoplasm before mitochondrial import, leading to its degradation. Within the SIFI complex, UBR4 initiates ubiquitin chain that are further elongated or branched by KCMF1.

It localises to the mitochondrion matrix. The enzyme catalyses oxaloacetate + acetyl-CoA + H2O = citrate + CoA + H(+). The protein operates within carbohydrate metabolism; tricarboxylic acid cycle; isocitrate from oxaloacetate: step 1/2. In terms of biological role, key enzyme of the Krebs tricarboxylic acid cycle which catalyzes the synthesis of citrate from acetyl coenzyme A and oxaloacetate. The polypeptide is Citrate synthase, mitochondrial (CS) (Sus scrofa (Pig)).